Reading from the N-terminus, the 304-residue chain is Glycine--tRNA ligase alpha subunit (304 aa).

It belongs to the class-II aminoacyl-tRNA synthetase family. In terms of assembly, tetramer of two alpha and two beta subunits.

The protein localises to the cytoplasm. The catalysed reaction is tRNA(Gly) + glycine + ATP = glycyl-tRNA(Gly) + AMP + diphosphate. The chain is Glycine--tRNA ligase alpha subunit from Yersinia pseudotuberculosis serotype O:1b (strain IP 31758).